A 107-amino-acid polypeptide reads, in one-letter code: Ig kappa chain V region 4135 (107 aa).

A framework-1 region spans residues 1 to 24; sequence ADIVMTQTPASVSEPVGGTVTIKC. The complementarity-determining-1 stretch occupies residues 25-35; sequence QTSQSIDDYLS. Residues 36–50 form a framework-2 region; that stretch reads WYQQKPGQPPKGLIY. A complementarity-determining-2 region spans residues 51–57; sequence RASTLAS. The interval 58–89 is framework-3; that stretch reads GVPSRFRGSGSGTDFTLTISDLECADAATYYC. A complementarity-determining-3 region spans residues 90–96; it reads QSTYGVG. The framework-4 stretch occupies residues 97–106; it reads FGGGTEVVVK.

The polypeptide is Ig kappa chain V region 4135 (Oryctolagus cuniculus (Rabbit)).